Reading from the N-terminus, the 482-residue chain is Catalase easC (482 aa).

H58 is an active-site residue. Y347 contributes to the heme binding site.

It belongs to the catalase family. Heme serves as cofactor.

Its pathway is alkaloid biosynthesis; ergot alkaloid biosynthesis. In terms of biological role, catalase; part of the gene cluster that mediates the biosynthesis of fungal ergot alkaloid. DmaW catalyzes the first step of ergot alkaloid biosynthesis by condensing dimethylallyl diphosphate (DMAP) and tryptophan to form 4-dimethylallyl-L-tryptophan. The second step is catalyzed by the methyltransferase easF that methylates 4-dimethylallyl-L-tryptophan in the presence of S-adenosyl-L-methionine, resulting in the formation of 4-dimethylallyl-L-abrine. The catalase easC and the FAD-dependent oxidoreductase easE then transform 4-dimethylallyl-L-abrine to chanoclavine-I which is further oxidized by easD in the presence of NAD(+), resulting in the formation of chanoclavine-I aldehyde. Chanoclavine-I aldehyde is the precursor of ergoamides and ergopeptines in Clavicipitaceae, and clavine-type alcaloids such as fumiclavine in Trichocomaceae. However, the metabolites downstream of chanoclavine-I aldehyde in Arthrodermataceae have not been identified yet. The polypeptide is Catalase easC (Arthroderma otae (strain ATCC MYA-4605 / CBS 113480) (Microsporum canis)).